We begin with the raw amino-acid sequence, 143 residues long: Putative pre-16S rRNA nuclease (143 aa).

Belongs to the YqgF nuclease family.

Its subcellular location is the cytoplasm. In terms of biological role, could be a nuclease involved in processing of the 5'-end of pre-16S rRNA. This Marinobacter nauticus (strain ATCC 700491 / DSM 11845 / VT8) (Marinobacter aquaeolei) protein is Putative pre-16S rRNA nuclease.